The chain runs to 446 residues: Fatty acid desaturase 2 (446 aa).

The Cytoplasmic segment spans residues 1–132; it reads MGMGGQSGEG…EDMRLFKSNP (132 aa). In terms of domain architecture, Cytochrome b5 heme-binding spans 20-97; that stretch reads EAQYSWEEIQ…LKPLYIGELA (78 aa). The helical transmembrane segment at 133-153 threads the bilayer; that stretch reads AFFIFYLFHILLIEFLAWCTL. Histidine 154 is a topological domain (lumenal). Residues 155 to 175 form a helical membrane-spanning segment; the sequence is YLGTGWIPAIITVLLLTISQA. Residues 176-265 lie on the Cytoplasmic side of the membrane; that stretch reads QAGWLQHDFG…IKYLPYNHQH (90 aa). The Histidine box-1 motif lies at 182-186; that stretch reads HDFGH. The short motif at 219-223 is the Histidine box-2 element; the sequence is HFQHH. The chain crosses the membrane as a helical span at residues 266 to 286; sequence LYFFLIGPPLLIPVYFTVQII. Over 287–307 the chain is Lumenal; the sequence is KTMIARKDWVDLAWSVSYYVR. A helical transmembrane segment spans residues 308 to 328; sequence FFFTFVPFFGVLGSLALLNAV. The Cytoplasmic segment spans residues 329–446; that stretch reads RFFESHWFVW…QLWLDAYLHK (118 aa). Residues 384–388 carry the Histidine box-3 motif; the sequence is QIEHH.

Belongs to the fatty acid desaturase type 1 family.

The protein localises to the endoplasmic reticulum membrane. It functions in the pathway lipid metabolism; polyunsaturated fatty acid biosynthesis. In terms of biological role, component of a lipid metabolic pathway that catalyzes biosynthesis of highly unsaturated fatty acids (HUFA) from precursor essential polyunsaturated fatty acids (PUFA) linoleic acid (LA) (18:2n-6) and alpha-linolenic acid (ALA) (18:3n-3). Catalyzes the first and rate limiting step in this pathway which is the desaturation of LA (18:2n-6) and ALA (18:3n-3) into gamma-linoleic acid (GLA) (18:3n-6) and stearidonic acid (18:4n-3) respectively and other desaturation steps. Highly unsaturated fatty acids (HUFA) play pivotal roles in many biological functions. The sequence is that of Fatty acid desaturase 2 (fads2) from Xenopus laevis (African clawed frog).